Here is a 181-residue protein sequence, read N- to C-terminus: Inner membrane-spanning protein YciB (181 aa).

Transmembrane regions (helical) follow at residues 10-30 (LIIF…GALI), 50-70 (MHLI…VFHD), 72-92 (AFIK…LGVS), 118-138 (VTWY…YVAF), and 148-168 (FKVF…VFYL).

The protein belongs to the YciB family.

The protein localises to the cell inner membrane. Its function is as follows. Plays a role in cell envelope biogenesis, maintenance of cell envelope integrity and membrane homeostasis. The sequence is that of Inner membrane-spanning protein YciB from Shewanella sp. (strain ANA-3).